A 456-amino-acid polypeptide reads, in one-letter code: MSEIVKIKALEVLDSRGNPTIQVEVHTISGAYGKALVPSGASTGSREALELRDESTKYKDNWYASKGVQKAVDNVNNKIADLLIGQNVLDQRNIDNIMIEADGTENKSKFGANAILGVSLAAAHAGANFLQIPLYRYIGGINANMLPLPMLNVINGGEHASNTIDFQEFMIMPMGAKTFKESLQMANKVFHNLAKLLKKAGHGTQVGDEGGFAPNLKNHEEVLDFLMQAIEVAGFVASTSKEKGIAIAIDAASSELYDQSTGKYTFKKLKQAIKTKQPGFENVEKTKLDFTSDELIAYYGELISKYPIISIEDGFAESDWQGFAKFTKIYGEKLQIVGDDLTVTNSKILERAIKEKSMNSILVKLNQIGSLSETLDTINMAHKAGFSAVISHRSGETEDTTIADLAVALNTGQIKTGSLSRTDRIAKYNRLLEIEDQLEEAAVFPGKKAFWNLKNR.

Q167 lines the (2R)-2-phosphoglycerate pocket. The active-site Proton donor is E209. Positions 250, 312, and 339 each coordinate Mg(2+). Residues K364, R393, S394, and K415 each contribute to the (2R)-2-phosphoglycerate site. K364 (proton acceptor) is an active-site residue.

It belongs to the enolase family. Requires Mg(2+) as cofactor.

It is found in the cytoplasm. The protein localises to the secreted. Its subcellular location is the cell surface. It carries out the reaction (2R)-2-phosphoglycerate = phosphoenolpyruvate + H2O. It participates in carbohydrate degradation; glycolysis; pyruvate from D-glyceraldehyde 3-phosphate: step 4/5. In terms of biological role, catalyzes the reversible conversion of 2-phosphoglycerate (2-PG) into phosphoenolpyruvate (PEP). It is essential for the degradation of carbohydrates via glycolysis. This chain is Enolase, found in Mycoplasmopsis pulmonis (strain UAB CTIP) (Mycoplasma pulmonis).